A 679-amino-acid chain; its full sequence is Methionine--tRNA ligase (679 aa).

The short motif at 15 to 25 (PYANGPIHLGH) is the 'HIGH' region element. Zn(2+) is bound by residues cysteine 146, cysteine 149, cysteine 159, and cysteine 162. The 'KMSKS' region motif lies at 332-336 (KMSKS). Lysine 335 lines the ATP pocket. In terms of domain architecture, tRNA-binding spans 578 to 679 (DFAKIDLRIA…EGAQPGMKVK (102 aa)).

The protein belongs to the class-I aminoacyl-tRNA synthetase family. MetG type 1 subfamily. Homodimer. Zn(2+) is required as a cofactor.

It localises to the cytoplasm. It catalyses the reaction tRNA(Met) + L-methionine + ATP = L-methionyl-tRNA(Met) + AMP + diphosphate. Its function is as follows. Is required not only for elongation of protein synthesis but also for the initiation of all mRNA translation through initiator tRNA(fMet) aminoacylation. The chain is Methionine--tRNA ligase from Shewanella halifaxensis (strain HAW-EB4).